The following is a 295-amino-acid chain: Glutamyl-Q tRNA(Asp) synthetase (295 aa).

L-glutamate contacts are provided by residues 9–13 (RFAPT) and Glu-45. The 'HIGH' region signature appears at 12–22 (PTPSGFLHFGS). 4 residues coordinate Zn(2+): Cys-101, Cys-103, Tyr-115, and Cys-119. Positions 172 and 190 each coordinate L-glutamate. A 'KMSKS' region motif is present at residues 228 to 232 (KLGKS). Lys-231 contacts ATP.

The protein belongs to the class-I aminoacyl-tRNA synthetase family. GluQ subfamily. The cofactor is Zn(2+).

Functionally, catalyzes the tRNA-independent activation of glutamate in presence of ATP and the subsequent transfer of glutamate onto a tRNA(Asp). Glutamate is transferred on the 2-amino-5-(4,5-dihydroxy-2-cyclopenten-1-yl) moiety of the queuosine in the wobble position of the QUC anticodon. This is Glutamyl-Q tRNA(Asp) synthetase from Pseudomonas putida (strain GB-1).